We begin with the raw amino-acid sequence, 336 residues long: uncharacterized protein (336 aa).

Positions Ala162 to Asp195 are disordered. A compositionally biased stretch (low complexity) spans Ser169–Thr187.

The protein belongs to the AHA1 family.

This is an uncharacterized protein from Schizosaccharomyces pombe (strain 972 / ATCC 24843) (Fission yeast).